A 662-amino-acid polypeptide reads, in one-letter code: Fructose-1,6-bisphosphatase class 3 (662 aa).

It belongs to the FBPase class 3 family. Mn(2+) is required as a cofactor.

The catalysed reaction is beta-D-fructose 1,6-bisphosphate + H2O = beta-D-fructose 6-phosphate + phosphate. It participates in carbohydrate biosynthesis; gluconeogenesis. This is Fructose-1,6-bisphosphatase class 3 from Clostridium tetani (strain Massachusetts / E88).